Consider the following 832-residue polypeptide: tRNA ligase (832 aa).

The active-site N6-AMP-lysine intermediate is the Lys108.

This sequence belongs to the TRL1 family.

It carries out the reaction ATP + (ribonucleotide)n-3'-hydroxyl + 5'-phospho-(ribonucleotide)m = (ribonucleotide)n+m + AMP + diphosphate.. One of the two proteins required for the splicing of precursor tRNA molecules containing introns. The ligation activity requires three enzymatic activities: phosphorylation of the 5' terminus of the 3' half-tRNA in the presence of ATP, opening of the 2'3'-cyclic phosphodiester bond of the 5' half-tRNA leaving a 2'-phosphomonoester and ligation of the two tRNA halves in an ATP-dependent reaction. The polypeptide is tRNA ligase (LIG1) (Candida albicans (strain SC5314 / ATCC MYA-2876) (Yeast)).